Reading from the N-terminus, the 213-residue chain is PRA1 family protein B2 (213 aa).

The segment at 1 to 21 (MSSSPAILPVTNQQAATQSQP) is disordered. A run of 5 helical transmembrane segments spans residues 75-94 (LAYF…AFSL), 98-117 (PFSL…LYLF), 137-157 (LLGL…GSLL), 161-181 (LTIG…DDLF), and 190-210 (AGLL…SVVA).

It belongs to the PRA1 family. In terms of assembly, interacts with PRA1B1, PRA1B3, PRA1B4, PRA1B5, PRA1B6 and PRA1E.

It localises to the endosome membrane. Its function is as follows. May be involved in both secretory and endocytic intracellular trafficking in the endosomal/prevacuolar compartments. The sequence is that of PRA1 family protein B2 (PRA1B2) from Arabidopsis thaliana (Mouse-ear cress).